A 491-amino-acid polypeptide reads, in one-letter code: Chondroitin proteoglycan 2 (491 aa).

Positions Met-1–Gly-18 are cleaved as a signal peptide. A Chitin-binding type-2 1 domain is found at Leu-21–Gly-78. Cysteines 54 and 67 form a disulfide. Positions Gly-80–Asn-126 are disordered. The segment covering Ser-87 to Gly-120 has biased composition (gly residues). The 58-residue stretch at Asn-125–Gly-182 folds into the Chitin-binding type-2 2 domain. Cys-158 and Cys-171 are disulfide-bonded. Residues Asp-187–Glu-217 are disordered. Ser-197 and Ser-201 each carry an O-linked (Xyl...) (chondroitin sulfate) serine glycan. Positions Ala-200–Gly-210 are enriched in low complexity. 4 Chitin-binding type-2 domains span residues Glu-217–Gly-274, Ala-279–Glu-334, Glu-367–Ile-423, and Pro-436–His-491. Intrachain disulfides connect Cys-250-Cys-263 and Cys-310-Cys-323. The segment at Ser-336–Glu-367 is disordered. Residues Ala-356 to Glu-367 show a composition bias toward low complexity. A disulfide bridge links Cys-399 with Cys-412. N-linked (GlcNAc...) asparagine glycosylation is present at Asn-464. The cysteines at positions 467 and 481 are disulfide-linked.

Functionally, required for polar body extrusion during cytokinesis in embryo development. Affects cortical granule size. Shown to have roles in meiotic chromosome segregation, osmotic barrier function and polarization in conjunction with cpg-2. Binds chitin. The chain is Chondroitin proteoglycan 2 from Caenorhabditis briggsae.